The chain runs to 1028 residues: Sporulation-specific protein 3 (1028 aa).

It is found in the prospore membrane. Has a role in spore morphogenesis. Involved in the assembly of the forespore membrane. In Schizosaccharomyces pombe (strain 972 / ATCC 24843) (Fission yeast), this protein is Sporulation-specific protein 3 (spo3).